The sequence spans 430 residues: Adenylosuccinate synthetase (430 aa).

GTP contacts are provided by residues 12–18 and 40–42; these read GDEGKGK and GHT. Aspartate 13 (proton acceptor) is an active-site residue. Mg(2+) contacts are provided by aspartate 13 and glycine 40. IMP-binding positions include 13-16, 38-41, threonine 128, arginine 142, glutamine 223, threonine 238, and arginine 302; these read DEGK and NAGH. The active-site Proton donor is the histidine 41. Residue 298 to 304 participates in substrate binding; sequence TTTGRPR. GTP contacts are provided by residues arginine 304, 330–332, and 412–414; these read LLD and SVG.

The protein belongs to the adenylosuccinate synthetase family. In terms of assembly, homodimer. It depends on Mg(2+) as a cofactor.

It is found in the cytoplasm. The catalysed reaction is IMP + L-aspartate + GTP = N(6)-(1,2-dicarboxyethyl)-AMP + GDP + phosphate + 2 H(+). It participates in purine metabolism; AMP biosynthesis via de novo pathway; AMP from IMP: step 1/2. Plays an important role in the de novo pathway of purine nucleotide biosynthesis. Catalyzes the first committed step in the biosynthesis of AMP from IMP. The sequence is that of Adenylosuccinate synthetase from Listeria monocytogenes serotype 4a (strain HCC23).